The primary structure comprises 78 residues: Large ribosomal subunit protein bL28 (78 aa).

Positions 1–28 (MSAICQVTGRQPGYGKSVSHSHRRTSRR) are disordered.

It belongs to the bacterial ribosomal protein bL28 family.

The polypeptide is Large ribosomal subunit protein bL28 (Corynebacterium diphtheriae (strain ATCC 700971 / NCTC 13129 / Biotype gravis)).